Reading from the N-terminus, the 635-residue chain is Cell pattern formation-associated protein stuA (635 aa).

2 disordered regions span residues 1 to 21 and 63 to 82; these read MNQTQPYMDVHSSHLSSAQPY and SGVASSQTAPPPPSTSMSSQ. One can recognise an HTH APSES-type domain in the interval 129-235; the sequence is RVTATLWEDE…HNIGGLLYHP (107 aa). A DNA-binding region (H-T-H motif) is located at residues 163-184; sequence GTKLLNVAGMTRGRRDGILKSE. Disordered regions lie at residues 246 to 480 and 498 to 635; these read QESQ…ASRS and SQLT…PRRR. 2 stretches are compositionally biased toward low complexity: residues 276–294 and 312–325; these read MQTSIPSQMPQPPTMSSQP and SASSLMGLSNQSSS. Over residues 326-355 the composition is skewed to polar residues; that stretch reads YDWNNQGMNSGVPNTQPLSIDTTLSNTRSM. The segment covering 356-380 has biased composition (low complexity); that stretch reads PTTPATTPPGNNLQGMQSYQSQSGY. Residues 460-469 show a composition bias toward basic and acidic residues; sequence APEHESEYVQ. Polar residues-rich tracts occupy residues 498 to 513 and 539 to 571; these read SQLTNDITGSPQQNGS and AASSLYNIVSDTRGSSNGAGSENYTVASNTAPT. Residues 582–605 are nuclear localization domain; that stretch reads KRGREDDDMGRPDSQGDYESKRRR. Residues 583-592 show a composition bias toward basic and acidic residues; that stretch reads RGREDDDMGR.

This sequence belongs to the EFG1/PHD1/stuA family.

Transcription factor that regulates asexual reproduction. Binds the StuA-response elements (StRE) with the consensus sequence 5'-(A/T)CGCG(T/A)N(A/C)-3' at the promoters of target genes. Controls the expression of 6 secondary metabolite biosynthetic clusters including 2 involved in the synthesis of alkaloids (fumigaclavine and fumitremorgen), 2 clusters of the ETP class (gliotoxin and an unknown ETP-like toxin), a cluster predicted to produce pseurotin A, and the product of the last cluster is unknown. Controls the production of ergot alkaloids during conidiophore development. Controls expression of sspA and gliP. Involved in the induction of immunoglobulin E-independent mast cell degranulation. This Aspergillus fumigatus (strain ATCC MYA-4609 / CBS 101355 / FGSC A1100 / Af293) (Neosartorya fumigata) protein is Cell pattern formation-associated protein stuA.